A 370-amino-acid chain; its full sequence is Adaptive-response sensory kinase SasA (370 aa).

The Histidine kinase domain maps to Met152–Gln365. A Phosphohistidine; by autocatalysis modification is found at His155.

Homooligomerizes. Interacts with KaiC. Participates in the KaiBC complex, whose core is composed of a KaiC homohexamer and 6 KaiB.

It catalyses the reaction ATP + protein L-histidine = ADP + protein N-phospho-L-histidine.. Member of the two-component regulatory system SasA/RpaA involved in genome-wide circadian gene expression. One of several clock output pathways. Participates in the Kai clock protein complex, the main circadian regulator in cyanobacteria, via its interaction with KaiC. KaiC enhances the autophosphorylation activity of SasA, which then transfers its phosphate group to RpaA to activate it. In addition to its output function, recruits fold-shifted KaiB (KaiB(fs)) to KaiC to cooperatively form the KaiB(6):KaiC(6) complex (independent of SasA kinase activity). Required for robustness of the circadian rhythm of gene expression and is involved in clock output, also required for adaptation to light/dark cycles. In Prochlorococcus marinus (strain MIT 9303), this protein is Adaptive-response sensory kinase SasA.